A 190-amino-acid chain; its full sequence is Movement protein (190 aa).

The protein belongs to the tombusvirus/aureusvirus movement protein p22 family.

It is found in the host membrane. In terms of biological role, transports viral genome to neighboring plant cells directly through plasmosdesmata, without any budding. The movement protein allows efficient cell to cell propagation, by bypassing the host cell wall barrier. This is Movement protein from Cucumber necrosis virus (CNV).